The sequence spans 126 residues: Protein ApaG (126 aa).

An ApaG domain is found at Ser2–His126.

In Ectopseudomonas mendocina (strain ymp) (Pseudomonas mendocina), this protein is Protein ApaG.